Reading from the N-terminus, the 202-residue chain is Glycerol-3-phosphate acyltransferase (202 aa).

6 helical membrane-spanning segments follow: residues 2-22 (MIIV…GFVI), 54-74 (FLVT…PLWL), 85-105 (FFTN…YPVY), 120-140 (VVLG…FIVL), 141-161 (KIFK…VIGS), and 162-182 (LIIQ…ILII).

The protein belongs to the PlsY family. Probably interacts with PlsX.

The protein resides in the cell membrane. It catalyses the reaction an acyl phosphate + sn-glycerol 3-phosphate = a 1-acyl-sn-glycero-3-phosphate + phosphate. Its pathway is lipid metabolism; phospholipid metabolism. Functionally, catalyzes the transfer of an acyl group from acyl-phosphate (acyl-PO(4)) to glycerol-3-phosphate (G3P) to form lysophosphatidic acid (LPA). This enzyme utilizes acyl-phosphate as fatty acyl donor, but not acyl-CoA or acyl-ACP. The polypeptide is Glycerol-3-phosphate acyltransferase (Staphylococcus aureus (strain USA300)).